We begin with the raw amino-acid sequence, 144 residues long: Large ribosomal subunit protein uL16 (144 aa).

Residues 1–19 are compositionally biased toward basic residues; it reads MLLPKRVKYRRQHRPKTTG. A disordered region spans residues 1-26; that stretch reads MLLPKRVKYRRQHRPKTTGRSKGGNE.

It belongs to the universal ribosomal protein uL16 family. Part of the 50S ribosomal subunit.

Binds 23S rRNA and is also seen to make contacts with the A and possibly P site tRNAs. In Macrococcus caseolyticus (strain JCSC5402) (Macrococcoides caseolyticum), this protein is Large ribosomal subunit protein uL16.